Reading from the N-terminus, the 179-residue chain is Transcription initiation factor TFIID subunit 10 (179 aa).

Residues 1-23 form a disordered region; the sequence is MNDPEQYEPSSSTESVLMPPPAL.

This sequence belongs to the TAF10 family. Component of the TFIID basal transcription factor complex, composed of TATA-box-binding protein tbp-1, and a number of TBP-associated factors (TAFs).

It is found in the nucleus. In terms of biological role, the TFIID basal transcription factor complex plays a major role in the initiation of RNA polymerase II (Pol II)-dependent transcription. TFIID recognizes and binds promoters via its subunit tbp-1, a TATA-box-binding protein, and promotes assembly of the pre-initiation complex (PIC). The TFIID complex consists of tbp-1 and TBP-associated factors (TAFs), including taf-10. Essential for early embryonic development, but not required for transcription of some genes; probably acts via activating transcription initiation by RNA Pol II, as part of the TFIID complex. This chain is Transcription initiation factor TFIID subunit 10, found in Caenorhabditis elegans.